Reading from the N-terminus, the 268-residue chain is Energy-coupling factor transporter transmembrane protein EcfT (268 aa).

The next 5 membrane-spanning stretches (helical) occupy residues 29–49 (VFIFLVFMFMTRDPLLLTVAV), 75–95 (IIIVLTFVLHLFMTGGGEVIV), 107–127 (LIEGFMLAMKLAMIITIASLL), 152–172 (LPTHELALMMSIALRFIPTLI), and 242–262 (WGLKDSVVLAVFLLFAAAVMA).

Belongs to the energy-coupling factor EcfT family. As to quaternary structure, forms a stable energy-coupling factor (ECF) transporter complex composed of 2 membrane-embedded substrate-binding proteins (S component), 2 ATP-binding proteins (A component) and 2 transmembrane proteins (T component). May be able to interact with more than 1 S component at a time.

The protein resides in the cell membrane. Functionally, transmembrane (T) component of an energy-coupling factor (ECF) ABC-transporter complex. Unlike classic ABC transporters this ECF transporter provides the energy necessary to transport a number of different substrates. The chain is Energy-coupling factor transporter transmembrane protein EcfT from Bacillus selenitireducens (strain ATCC 700615 / DSM 15326 / MLS10).